We begin with the raw amino-acid sequence, 174 residues long: 2-C-methyl-D-erythritol 2,4-cyclodiphosphate synthase (174 aa).

The a divalent metal cation site is built by Asp-13, His-15, and His-61. 13–15 (DAH) lines the 4-CDP-2-C-methyl-D-erythritol 2-phosphate pocket. 4-CDP-2-C-methyl-D-erythritol 2-phosphate contacts are provided by residues 75–77 (DIG), 149–152 (TTTD), Phe-156, and His-159.

The protein belongs to the IspF family. Homotrimer. A divalent metal cation is required as a cofactor.

It carries out the reaction 4-CDP-2-C-methyl-D-erythritol 2-phosphate = 2-C-methyl-D-erythritol 2,4-cyclic diphosphate + CMP. The protein operates within isoprenoid biosynthesis; isopentenyl diphosphate biosynthesis via DXP pathway; isopentenyl diphosphate from 1-deoxy-D-xylulose 5-phosphate: step 4/6. Its function is as follows. Involved in the biosynthesis of isopentenyl diphosphate (IPP) and dimethylallyl diphosphate (DMAPP), two major building blocks of isoprenoid compounds. Catalyzes the conversion of 4-diphosphocytidyl-2-C-methyl-D-erythritol 2-phosphate (CDP-ME2P) to 2-C-methyl-D-erythritol 2,4-cyclodiphosphate (ME-CPP) with a corresponding release of cytidine 5-monophosphate (CMP). This Bifidobacterium longum (strain NCC 2705) protein is 2-C-methyl-D-erythritol 2,4-cyclodiphosphate synthase.